The sequence spans 970 residues: uncharacterized protein (970 aa).

A helical membrane pass occupies residues 11-31 (WILKIGTILGLVCLGLFGVIF). Positions 366-387 (ASNSNDNNNQNNNNNNNSSDVI) are disordered. The span at 367–387 (SNSNDNNNQNNNNNNNSSDVI) shows a compositional bias: low complexity. Helical transmembrane passes span 515-535 (FASSFIAFGIIVLIAAVLLTL), 537-557 (YKLLGLYKALALGLSVVSSLV), 558-578 (IFSAVGGVVDVFSFVGIFFVI), 614-634 (FFANLEFHITWLISALVVIYL), 645-665 (LMAISAITSYFFSYGISIVLI), 726-746 (FLFVWLILLAIGVVMLVLYLV), 762-782 (SNGIIAGIGIVSLLYLAYCLI), 789-809 (CLSYLVSFILLCSGLFAVMYL), 816-836 (IDQSTIQLITFVYLFWLFFAA), 877-897 (IESSSLVFIFIIYSGFNFGGI), and 903-923 (LVIFYLIAIVGLFDVATAFLP).

The protein localises to the cell membrane. This is an uncharacterized protein from Mycoplasma genitalium (strain ATCC 33530 / DSM 19775 / NCTC 10195 / G37) (Mycoplasmoides genitalium).